The sequence spans 617 residues: MAFPHRLDAPELPDFSMLKRLARDQLIYLLEQLPGKKDLFIEADLMSPLDRIANVSILKQHEVDKLYKVENKPALSANEQLCFLVRPRIKNMRYIASLVNADKLAGRIRKYKVILSPQKFYACEMVLEEEGVYGDVSCDEWAFSLLPLDVDLLSMELPEFFRDYFLEGDQRWINTVAQALHLLSTLYGPFPNCYGIGRCAKMSYDLWRKLEEEEDSETKGRKPEIGHIFLLDRDVDFVTALCSQVVYEGLVDDTFRIKCGSVDFGPEVTSSDKSLKVLLNAEDKVFSEIRNEHFSNVFGFLSQKARNLQAQYDRRRGMDIKQMKNFVSQELKGLKQEHRLLSLHIGACESIMKKKTKQDFQELIKTEHALLEGFNIRESTSYIEEHIDRQVSPIESLRLMCLLSITENGLIPKDYRSLKTQYLQSYGPEHLLTFSNLRRAGLLTEQAPGDTLTAVESKVSKLVTDKAAGKITDAFSSLAKRSNFRAISKKLNLIPRVDGEYDLKVPRDMAYVFSGAYVPLSCRIIEQVLDRRSWQGLDEVVRLLNCSEFAFTDTAKEDKASSESLRLILVVFLGGCTFSEISALRFLGREKGYRFIFLTTAVTNSARLMEAMSEVKS.

The residue at position 2 (A2) is an N-acetylalanine.

Belongs to the STXBP/unc-18/SEC1 family. As to quaternary structure, interacts with RAB11A and VIPAS39. Associates with adapter protein complex 3 (AP-3), clathrin:AP-3 and clathrin:HGS complexes. Phosphorylated on tyrosine residues.

It is found in the late endosome membrane. The protein localises to the lysosome membrane. Its subcellular location is the early endosome. The protein resides in the cytoplasmic vesicle. It localises to the clathrin-coated vesicle. It is found in the recycling endosome. In terms of biological role, may play a role in vesicle-mediated protein trafficking to lysosomal compartments and in membrane docking/fusion reactions of late endosomes/lysosomes. Required for proper trafficking and targeting of the collagen-modifying enzyme lysyl hydroxylase 3 (LH3) to intracellular collagen. Mediates phagolysosomal fusion in macrophages. Proposed to be involved in endosomal maturation implicating in part VIPAS39. In epithelial cells, the VPS33B:VIPAS39 complex may play a role in the apical RAB11A-dependentrecycling pathway and in the maintenance of the apical-basolateral polarity. Seems to be involved in the sorting of specific cargos from the trans-Golgi network to alpha-granule-destined multivesicular bodies (MVBs) promoting MVBs maturation in megakaryocytes. The sequence is that of Vacuolar protein sorting-associated protein 33B (Vps33b) from Mus musculus (Mouse).